The sequence spans 530 residues: MLGTDRCVVEEWLSEFKALPDTQITSYAATLHRKKTLVPALYKVIQDSNNELLEPVCHQLFELYRSSEVRLKRFTLQFLPELMWVYLRLTVSRDRQSNGCIEALLLGIYNLEIADKDGNNKVLSFTIPSLSKPSIYHEPSTIGSMALTEGALCQHDLIRVVYSDLHPQRETFTAQNRFEVLSFLMLCYNSAIVYMPASSYQSLCRMGSRVCVSGFPRQHEKHWKELCGRIVLDPEFMVQLLTGVYYAMYNGQWDLGQEVLDDIIYRAQLELFSQPLLVANAMKNSLPFDAPDSTQEGQKVLKVEVTPTVPRISRTAITTASIRRHRWRREGAEGVNGGEESVNLNDADEGFSSGASLSSQPIGTKPSSSSQRGSLRKVATGRSAKDKETASAIKSSESPRDSVVRKQYVQQPTDLSVDSVELTPMKKHLSLPAGQVVPKTNSLSLIRTASASSSKSFDYVNGSQASTSIGVGTEGGTNLAANNANRYSTVSLQEDRLGQAGEGKELLSPGAPLTKQSRSPSFNMQLISQV.

Threonine 30 and threonine 306 each carry phosphothreonine. Residues serine 321 and serine 341 each carry the phosphoserine modification. Positions 328–410 (RREGAEGVNG…DSVVRKQYVQ (83 aa)) are disordered. The span at 353–373 (SGASLSSQPIGTKPSSSSQRG) shows a compositional bias: polar residues. Serine 430, serine 442, serine 444, and serine 491 each carry phosphoserine. The disordered stretch occupies residues 498–530 (GQAGEGKELLSPGAPLTKQSRSPSFNMQLISQV). The segment covering 514–530 (TKQSRSPSFNMQLISQV) has biased composition (polar residues).

This sequence belongs to the Hyccin family. As to quaternary structure, component of a phosphatidylinositol 4-kinase (PI4K) complex, composed of PI4KA, EFR3 (EFR3A or EFR3B), TTC7 (TTC7A or TTC7B) and HYCC (HYCC1 or HYCC2).

The protein localises to the cytoplasm. The protein resides in the cytosol. It is found in the cell membrane. In terms of biological role, component of a complex required to localize phosphatidylinositol 4-kinase (PI4K) to the plasma membrane. This is Hyccin 2 (HYCC2) from Pongo abelii (Sumatran orangutan).